The primary structure comprises 307 residues: Phospho-N-acetylmuramoyl-pentapeptide-transferase (307 aa).

Helical transmembrane passes span 3–23 (IILF…KYWI), 47–67 (SGTP…FLFF), 71–91 (FFPS…DFKL), 105–125 (IFLS…DYKI), 137–157 (IFYV…INLT), 162–182 (GLAG…NFQF), 186–206 (LTLE…FNSH), 210–230 (IFMG…LSII), 237–257 (LVFL…QVFF), and 285–305 (VVWR…ILWN).

The protein belongs to the glycosyltransferase 4 family. MraY subfamily. It depends on Mg(2+) as a cofactor.

The protein resides in the cell inner membrane. The catalysed reaction is UDP-N-acetyl-alpha-D-muramoyl-L-alanyl-gamma-D-glutamyl-meso-2,6-diaminopimeloyl-D-alanyl-D-alanine + di-trans,octa-cis-undecaprenyl phosphate = di-trans,octa-cis-undecaprenyl diphospho-N-acetyl-alpha-D-muramoyl-L-alanyl-D-glutamyl-meso-2,6-diaminopimeloyl-D-alanyl-D-alanine + UMP. The protein operates within cell wall biogenesis; peptidoglycan biosynthesis. Catalyzes the initial step of the lipid cycle reactions in the biosynthesis of the cell wall peptidoglycan: transfers peptidoglycan precursor phospho-MurNAc-pentapeptide from UDP-MurNAc-pentapeptide onto the lipid carrier undecaprenyl phosphate, yielding undecaprenyl-pyrophosphoryl-MurNAc-pentapeptide, known as lipid I. This Dictyoglomus turgidum (strain DSM 6724 / Z-1310) protein is Phospho-N-acetylmuramoyl-pentapeptide-transferase.